A 73-amino-acid chain; its full sequence is Serine rich endogenous peptide 14 (73 aa).

Positions 1-31 are cleaved as a signal peptide; that stretch reads MAAKTSNLVALLLSLFLLLLSISSQVGLGEA. The interval 44–73 is disordered; that stretch reads VSHPSPPPPHRSMAPPIFVPPSTSHKGQGP. The short motif at 59 to 73 is the SCOOP motif element; the sequence is PIFVPPSTSHKGQGP. Residues 64–73 are compositionally biased toward polar residues; the sequence is PSTSHKGQGP. The short motif at 65–67 is the SxS motif essential for MIK2 binding element; that stretch reads STS.

Belongs to the serine rich endogenous peptide (SCOOP) phytocytokine family. Interacts with MIK2 (via extracellular leucine-rich repeat domain); this interaction triggers the formation of complex between MIK2 and the BAK1/SERK3 and SERK4 coreceptors, and subsequent BAK1 activation by phosphorylation. As to expression, mostly expressed in seedlings shoots and leaves, and, to a lower extent, in roots, stems, siliques, seeds and flowers.

The protein localises to the cell membrane. Its subcellular location is the secreted. It localises to the extracellular space. The protein resides in the apoplast. Its function is as follows. Brassicaceae-specific phytocytokine (plant endogenous peptide released into the apoplast) perceived by MIK2 in a BAK1/SERK3 and SERK4 coreceptors-dependent manner, that modulates various physiological and antimicrobial processes including growth prevention and reactive oxygen species (ROS) response regulation. Inhibits root growth and regulates root meristems. Prevents general growth and development. Exhibits antibacterial effects against Pseudomonas syringae pv. tomato DC3000, Ralstonia solanacearum, Bacillus subtilis and Agrobacterium tumefaciens, thus being an antimicrobial peptide (AMP). The sequence is that of Serine rich endogenous peptide 14 from Arabidopsis thaliana (Mouse-ear cress).